A 376-amino-acid polypeptide reads, in one-letter code: Erythronate-4-phosphate dehydrogenase (376 aa).

Residues serine 45 and threonine 67 each coordinate substrate. Aspartate 147 contacts NAD(+). Arginine 209 is a catalytic residue. Aspartate 233 is a binding site for NAD(+). Residue glutamate 238 is part of the active site. Histidine 255 serves as the catalytic Proton donor. Glycine 258 contacts NAD(+). Tyrosine 259 lines the substrate pocket.

The protein belongs to the D-isomer specific 2-hydroxyacid dehydrogenase family. PdxB subfamily. As to quaternary structure, homodimer.

The protein localises to the cytoplasm. It carries out the reaction 4-phospho-D-erythronate + NAD(+) = (R)-3-hydroxy-2-oxo-4-phosphooxybutanoate + NADH + H(+). The protein operates within cofactor biosynthesis; pyridoxine 5'-phosphate biosynthesis; pyridoxine 5'-phosphate from D-erythrose 4-phosphate: step 2/5. Its function is as follows. Catalyzes the oxidation of erythronate-4-phosphate to 3-hydroxy-2-oxo-4-phosphonooxybutanoate. In Shewanella loihica (strain ATCC BAA-1088 / PV-4), this protein is Erythronate-4-phosphate dehydrogenase.